The sequence spans 152 residues: Protein-export protein SecB (152 aa).

Belongs to the SecB family. As to quaternary structure, homotetramer, a dimer of dimers. One homotetramer interacts with 1 SecA dimer.

Its subcellular location is the cytoplasm. One of the proteins required for the normal export of preproteins out of the cell cytoplasm. It is a molecular chaperone that binds to a subset of precursor proteins, maintaining them in a translocation-competent state. It also specifically binds to its receptor SecA. The protein is Protein-export protein SecB of Acinetobacter baumannii (strain AB307-0294).